The primary structure comprises 367 residues: Probable cinnamyl alcohol dehydrogenase (367 aa).

A Zn(2+)-binding site is contributed by Cys-47. Thr-49 provides a ligand contact to NADP(+). Zn(2+) is bound by residues His-69, Glu-70, Cys-100, Cys-103, Cys-106, Cys-114, and Cys-163. Residues Thr-167, 188 to 193 (GLGGVG), 211 to 216 (SSSSKK), Thr-251, Gly-275, and 298 to 300 (SFI) contribute to the NADP(+) site.

This sequence belongs to the zinc-containing alcohol dehydrogenase family. Homodimer. The cofactor is Zn(2+).

The catalysed reaction is (E)-cinnamyl alcohol + NADP(+) = (E)-cinnamaldehyde + NADPH + H(+). The enzyme catalyses (E)-coniferol + NADP(+) = (E)-coniferaldehyde + NADPH + H(+). It carries out the reaction (E)-sinapyl alcohol + NADP(+) = (E)-sinapaldehyde + NADPH + H(+). It catalyses the reaction (E)-4-coumaroyl alcohol + NADP(+) = (E)-4-coumaraldehyde + NADPH + H(+). The catalysed reaction is (E)-caffeyl alcohol + NADP(+) = (E)-caffeyl aldehyde + NADPH + H(+). It participates in aromatic compound metabolism; phenylpropanoid biosynthesis. Functionally, involved in lignin biosynthesis. May catalyze the final step specific for the production of lignin monomers, like coniferyl alcohol, sinapyl alcohol and 4-coumaryl alcohol. In Zea mays (Maize), this protein is Probable cinnamyl alcohol dehydrogenase.